A 132-amino-acid polypeptide reads, in one-letter code: Small ribosomal subunit protein uS8 (132 aa).

It belongs to the universal ribosomal protein uS8 family. In terms of assembly, part of the 30S ribosomal subunit. Contacts proteins S5 and S12.

Its function is as follows. One of the primary rRNA binding proteins, it binds directly to 16S rRNA central domain where it helps coordinate assembly of the platform of the 30S subunit. The polypeptide is Small ribosomal subunit protein uS8 (Shouchella clausii (strain KSM-K16) (Alkalihalobacillus clausii)).